The sequence spans 64 residues: Phylloxin-B1 (64 aa).

A signal peptide spans Met-1–Cys-22. Residues Glu-23 to Glu-42 constitute a propeptide that is removed on maturation. Gln-63 carries the post-translational modification Glutamine amide.

In terms of tissue distribution, expressed by the skin glands.

It is found in the secreted. Its function is as follows. Antimicrobial peptide against the wall-less bacteria A.laidlawii and S.melliferum, the Gram-positive bacteria B.megaterium KM, C.glutamicum ATCC 27853 and M.luteus ATCC 27853 and the Gram-negative-bacteria R.meliloti 102F34 and E.coli K12. This is Phylloxin-B1 from Phyllomedusa bicolor (Two-colored leaf frog).